The primary structure comprises 147 residues: Hemoglobin subunit gamma (147 aa).

A Globin domain is found at 3-147 (HFTAEEKAVI…VAIALAHKYH (145 aa)). Residues H64 and H93 each coordinate heme b.

This sequence belongs to the globin family. In terms of assembly, heterotetramer of two alpha chains and two gamma chains in fetal hemoglobin (Hb F). As to expression, red blood cells.

In terms of biological role, gamma chains make up the fetal hemoglobin F, in combination with alpha chains. In Eulemur fulvus fulvus (Brown lemur), this protein is Hemoglobin subunit gamma (HBG).